A 323-amino-acid polypeptide reads, in one-letter code: DNA-directed RNA polymerase subunit alpha 1 (323 aa).

An alpha N-terminal domain (alpha-NTD) region spans residues 1–228; the sequence is MSNNNSKLEF…EQISVFVSLR (228 aa). Positions 244 to 323 are alpha C-terminal domain (alpha-CTD); it reads IDPILLKPID…DNFRELVEGK (80 aa).

Belongs to the RNA polymerase alpha chain family. As to quaternary structure, homodimer. The RNAP catalytic core consists of 2 alpha, 1 beta, 1 beta' and 1 omega subunit. When a sigma factor is associated with the core the holoenzyme is formed, which can initiate transcription.

It catalyses the reaction RNA(n) + a ribonucleoside 5'-triphosphate = RNA(n+1) + diphosphate. In terms of biological role, DNA-dependent RNA polymerase catalyzes the transcription of DNA into RNA using the four ribonucleoside triphosphates as substrates. This chain is DNA-directed RNA polymerase subunit alpha 1, found in Francisella tularensis subsp. tularensis (strain FSC 198).